We begin with the raw amino-acid sequence, 595 residues long: Aspartate--tRNA(Asp/Asn) ligase (595 aa).

Position 175 (glutamate 175) interacts with L-aspartate. Residues 199 to 202 (QQYK) are aspartate. Arginine 221 and histidine 454 together coordinate L-aspartate. 221 to 223 (RDE) serves as a coordination point for ATP. Glutamate 488 contacts ATP. Residue arginine 495 coordinates L-aspartate. 540-543 (GIDR) lines the ATP pocket.

The protein belongs to the class-II aminoacyl-tRNA synthetase family. Type 1 subfamily. In terms of assembly, homodimer.

Its subcellular location is the cytoplasm. The enzyme catalyses tRNA(Asx) + L-aspartate + ATP = L-aspartyl-tRNA(Asx) + AMP + diphosphate. Functionally, aspartyl-tRNA synthetase with relaxed tRNA specificity since it is able to aspartylate not only its cognate tRNA(Asp) but also tRNA(Asn). Reaction proceeds in two steps: L-aspartate is first activated by ATP to form Asp-AMP and then transferred to the acceptor end of tRNA(Asp/Asn). The chain is Aspartate--tRNA(Asp/Asn) ligase from Brucella canis (strain ATCC 23365 / NCTC 10854 / RM-666).